The primary structure comprises 264 residues: uncharacterized protein (264 aa).

3 consecutive transmembrane segments (helical) span residues 48-68 (LTIT…LLVF), 112-132 (ITPS…FLLA), and 142-162 (LPIA…SYLI). Ser-260 bears the Phosphoserine mark.

Its subcellular location is the membrane. This is an uncharacterized protein from Schizosaccharomyces pombe (strain 972 / ATCC 24843) (Fission yeast).